A 184-amino-acid chain; its full sequence is Elongation factor P (184 aa).

This sequence belongs to the elongation factor P family.

It localises to the cytoplasm. Its pathway is protein biosynthesis; polypeptide chain elongation. In terms of biological role, involved in peptide bond synthesis. Stimulates efficient translation and peptide-bond synthesis on native or reconstituted 70S ribosomes in vitro. Probably functions indirectly by altering the affinity of the ribosome for aminoacyl-tRNA, thus increasing their reactivity as acceptors for peptidyl transferase. The sequence is that of Elongation factor P from Delftia acidovorans (strain DSM 14801 / SPH-1).